The sequence spans 280 residues: Probable cell division protein WhiA (280 aa).

Positions 247–279 form a DNA-binding region, H-T-H motif; sequence SLEQIANFFFTKYNIKISRSGIQHFSVNLKKLC.

Belongs to the WhiA family.

In terms of biological role, involved in cell division and chromosome segregation. This chain is Probable cell division protein WhiA, found in Mycoplasma genitalium (strain ATCC 33530 / DSM 19775 / NCTC 10195 / G37) (Mycoplasmoides genitalium).